The sequence spans 116 residues: Large ribosomal subunit protein uL22 (116 aa).

The protein belongs to the universal ribosomal protein uL22 family. Part of the 50S ribosomal subunit.

Its function is as follows. This protein binds specifically to 23S rRNA; its binding is stimulated by other ribosomal proteins, e.g. L4, L17, and L20. It is important during the early stages of 50S assembly. It makes multiple contacts with different domains of the 23S rRNA in the assembled 50S subunit and ribosome. The globular domain of the protein is located near the polypeptide exit tunnel on the outside of the subunit, while an extended beta-hairpin is found that lines the wall of the exit tunnel in the center of the 70S ribosome. The sequence is that of Large ribosomal subunit protein uL22 from Wolbachia pipientis subsp. Culex pipiens (strain wPip).